Consider the following 132-residue polypeptide: Small ribosomal subunit protein uS11 (132 aa).

This sequence belongs to the universal ribosomal protein uS11 family. In terms of assembly, part of the 30S ribosomal subunit.

Located on the platform of the 30S subunit. This Sulfurisphaera tokodaii (strain DSM 16993 / JCM 10545 / NBRC 100140 / 7) (Sulfolobus tokodaii) protein is Small ribosomal subunit protein uS11.